Reading from the N-terminus, the 122-residue chain is Basic phospholipase A2 (122 aa).

Cystine bridges form between Cys-26–Cys-115, Cys-28–Cys-44, Cys-43–Cys-95, Cys-49–Cys-122, Cys-50–Cys-88, Cys-57–Cys-81, and Cys-75–Cys-86. Ca(2+) contacts are provided by Tyr-27, Gly-29, and Gly-31. His-47 is an active-site residue. Ca(2+) is bound at residue Asp-48. Residue Asp-89 is part of the active site.

It belongs to the phospholipase A2 family. Group II subfamily. D49 sub-subfamily. Ca(2+) is required as a cofactor. As to expression, expressed by the venom gland.

It localises to the secreted. The enzyme catalyses a 1,2-diacyl-sn-glycero-3-phosphocholine + H2O = a 1-acyl-sn-glycero-3-phosphocholine + a fatty acid + H(+). In terms of biological role, snake venom phospholipase A2 (PLA2) that does not inhibit platelet aggregation. Exhibits cytotoxic and anticoagulant activity. Induces Ehrlich tumor growth but not angiogenesis. PLA2 catalyzes the calcium-dependent hydrolysis of the 2-acyl groups in 3-sn-phosphoglycerides. This chain is Basic phospholipase A2, found in Bothrops leucurus (Whitetail lancehead).